The primary structure comprises 232 residues: Lipoprotein-releasing system ATP-binding protein LolD (232 aa).

Positions 6–231 (ISCENLNKVY…KLTIKESQHV (226 aa)) constitute an ABC transporter domain. Residue 42–49 (GSSGSGKS) coordinates ATP.

Belongs to the ABC transporter superfamily. Lipoprotein translocase (TC 3.A.1.125) family. The complex is composed of two ATP-binding proteins (LolD) and two transmembrane proteins (LolC and LolE).

The protein resides in the cell inner membrane. In terms of biological role, part of the ABC transporter complex LolCDE involved in the translocation of mature outer membrane-directed lipoproteins, from the inner membrane to the periplasmic chaperone, LolA. Responsible for the formation of the LolA-lipoprotein complex in an ATP-dependent manner. The sequence is that of Lipoprotein-releasing system ATP-binding protein LolD from Pseudoalteromonas translucida (strain TAC 125).